Consider the following 986-residue polypeptide: Epidermin biosynthesis protein EpiB (986 aa).

The protein to B.subtilis SpaB and L.lactis NisB.

Its subcellular location is the cell membrane. Its function is as follows. Involved in the post-translational modification of the lantibiotic epidermin. The polypeptide is Epidermin biosynthesis protein EpiB (epiB) (Staphylococcus epidermidis).